Here is a 561-residue protein sequence, read N- to C-terminus: Potassium-transporting ATPase potassium-binding subunit (561 aa).

12 helical membrane-spanning segments follow: residues 1 to 21, 62 to 82, 132 to 152, 173 to 193, 253 to 273, 283 to 303, 327 to 347, 356 to 376, 379 to 399, 416 to 436, 483 to 503, and 526 to 546; these read MMAS…LLAR, YLLA…LILM, GLTV…FALM, ITLY…VSQG, FVQM…FGDV, LLWS…WAEV, FGIL…CGAV, ALGG…FGGV, GLYG…LMIG, MTAL…ALAM, MLLA…VLAI, and LFIA…FIPA.

The protein belongs to the KdpA family. The system is composed of three essential subunits: KdpA, KdpB and KdpC.

The protein localises to the cell inner membrane. Its function is as follows. Part of the high-affinity ATP-driven potassium transport (or Kdp) system, which catalyzes the hydrolysis of ATP coupled with the electrogenic transport of potassium into the cytoplasm. This subunit binds the periplasmic potassium ions and delivers the ions to the membrane domain of KdpB through an intramembrane tunnel. The sequence is that of Potassium-transporting ATPase potassium-binding subunit from Erwinia tasmaniensis (strain DSM 17950 / CFBP 7177 / CIP 109463 / NCPPB 4357 / Et1/99).